The sequence spans 366 residues: MSINSSKQPASSAAGLIANTTCQTENRLSVFFSIIFMTVGIVSNSLAIAILMKAYQRFRRKSKASFLLLASGLVITDFFGHLINGGIAVFVYASDKDWIRFDQSNILCSVFGISMVFSGLCPLFLGSTMAIERCIGVTNPLFHSTKITSKHVKMILSGVCMFAVFVALLPILGHRDYQIQASRTWCFYNTEHIEDWEDRFYLLFFSSLGLLALGISFSCNAVTGVTLLRVKFRSQQHRQGRSHHLEMVIQLLAIMCVSCVCWSPFLVTMANIAINGNNSPVTCETTLFALRMATWNQILDPWVYILLRKAVLRNLYKLASRCCGVNIISLHIWELSSIKNSLKVAAISESPAAEKENQQASSEAGL.

Residues 1-31 are Extracellular-facing; the sequence is MSINSSKQPASSAAGLIANTTCQTENRLSVF. N-linked (GlcNAc...) asparagine glycans are attached at residues Asn4 and Asn19. The helical transmembrane segment at 32-55 threads the bilayer; that stretch reads FSIIFMTVGIVSNSLAIAILMKAY. Residues 56 to 69 are Cytoplasmic-facing; sequence QRFRRKSKASFLLL. The chain crosses the membrane as a helical span at residues 70–90; it reads ASGLVITDFFGHLINGGIAVF. The Extracellular segment spans residues 91 to 109; the sequence is VYASDKDWIRFDQSNILCS. Cysteines 108 and 186 form a disulfide. Residues 110 to 131 form a helical membrane-spanning segment; that stretch reads VFGISMVFSGLCPLFLGSTMAI. Residues 132–152 lie on the Cytoplasmic side of the membrane; that stretch reads ERCIGVTNPLFHSTKITSKHV. A helical transmembrane segment spans residues 153 to 175; the sequence is KMILSGVCMFAVFVALLPILGHR. Topologically, residues 176–198 are extracellular; the sequence is DYQIQASRTWCFYNTEHIEDWED. The chain crosses the membrane as a helical span at residues 199 to 224; sequence RFYLLFFSSLGLLALGISFSCNAVTG. Over 225-250 the chain is Cytoplasmic; that stretch reads VTLLRVKFRSQQHRQGRSHHLEMVIQ. A helical membrane pass occupies residues 251–267; sequence LLAIMCVSCVCWSPFLV. The Extracellular portion of the chain corresponds to 268–285; that stretch reads TMANIAINGNNSPVTCET. The chain crosses the membrane as a helical span at residues 286–307; it reads TLFALRMATWNQILDPWVYILL. Residues 308-366 are Cytoplasmic-facing; it reads RKAVLRNLYKLASRCCGVNIISLHIWELSSIKNSLKVAAISESPAAEKENQQASSEAGL.

The protein belongs to the G-protein coupled receptor 1 family. Highest expression in pregnant ovary. Also found in a low extent in the kidney. In the brain, expressed in astrocytes and oligodendrocytes, and meningeal fibroblasts, but not in migroglia cells.

It is found in the cell membrane. In terms of biological role, receptor for prostaglandin F2-alpha (PGF2-alpha). The activity of this receptor is mediated by G proteins which activate a phosphatidylinositol-calcium second messenger system. Initiates luteolysis in the corpus luteum. The chain is Prostaglandin F2-alpha receptor (Ptgfr) from Rattus norvegicus (Rat).